The sequence spans 366 residues: Dual-specificity RNA methyltransferase RlmN (366 aa).

Glutamate 102 serves as the catalytic Proton acceptor. A Radical SAM core domain is found at 108–340; the sequence is DEGRNTLCVS…TTTRKTRGRD (233 aa). A disulfide bridge links cysteine 115 with cysteine 345. 3 residues coordinate [4Fe-4S] cluster: cysteine 122, cysteine 126, and cysteine 129. S-adenosyl-L-methionine-binding positions include 171 to 172, serine 203, 225 to 227, and asparagine 302; these read GE and SLH. Cysteine 345 functions as the S-methylcysteine intermediate in the catalytic mechanism.

This sequence belongs to the radical SAM superfamily. RlmN family. Requires [4Fe-4S] cluster as cofactor.

It is found in the cytoplasm. The enzyme catalyses adenosine(2503) in 23S rRNA + 2 reduced [2Fe-2S]-[ferredoxin] + 2 S-adenosyl-L-methionine = 2-methyladenosine(2503) in 23S rRNA + 5'-deoxyadenosine + L-methionine + 2 oxidized [2Fe-2S]-[ferredoxin] + S-adenosyl-L-homocysteine. The catalysed reaction is adenosine(37) in tRNA + 2 reduced [2Fe-2S]-[ferredoxin] + 2 S-adenosyl-L-methionine = 2-methyladenosine(37) in tRNA + 5'-deoxyadenosine + L-methionine + 2 oxidized [2Fe-2S]-[ferredoxin] + S-adenosyl-L-homocysteine. In terms of biological role, specifically methylates position 2 of adenine 2503 in 23S rRNA and position 2 of adenine 37 in tRNAs. m2A2503 modification seems to play a crucial role in the proofreading step occurring at the peptidyl transferase center and thus would serve to optimize ribosomal fidelity. This chain is Dual-specificity RNA methyltransferase RlmN, found in Methylococcus capsulatus (strain ATCC 33009 / NCIMB 11132 / Bath).